Here is a 67-residue protein sequence, read N- to C-terminus: Brevinin-1CDYa (67 aa).

The signal sequence occupies residues 1-22; that stretch reads MFTLKKSLLLIFFLGTINLSLC. The propeptide occupies 23–45; that stretch reads EEERNADEEERRDDLEERDVEVE. Cysteine 61 and cysteine 67 are oxidised to a cystine.

Belongs to the frog skin active peptide (FSAP) family. Brevinin subfamily. In terms of tissue distribution, expressed by the skin glands.

It localises to the secreted. Its function is as follows. Antimicrobial peptide. Has low activity against the Gram-positive bacterium S.aureus (MIC=12.5 uM) and the Gram-negative bacterium E.coli (MIC=25 uM). Has weak hemolytic activity against human erythrocytes. The protein is Brevinin-1CDYa of Rana dybowskii (Dybovsky's frog).